We begin with the raw amino-acid sequence, 271 residues long: MPELPEVETTRRGIAPHIAGWRIVDVRVREARLRWPVPADLGETLTGRRLTDVRRRGKYLLLDFDEGTLIAHLGMSGSLRICKPGFPPRKHDHVDLVFEGDICLRYHDPRRFGCLLWTAEPPERHPLLAALGPEPLDKAFDGAHLHRLAAGRNTAVKSFIMDSRVVAGVGNIYANEALFRAGIHPARPAGKISLARYRNLGEHIAEVLAASIEQGGTTLRDFVNESGAPGYFKQVLRVYDRAGQPCRVCGEPIRCVRLGQRATYYCPRCQR.

Residue P2 is the Schiff-base intermediate with DNA of the active site. The active-site Proton donor is the E3. Catalysis depends on K58, which acts as the Proton donor; for beta-elimination activity. Positions 91, 110, and 152 each coordinate DNA. The FPG-type zinc-finger motif lies at 237-271 (RVYDRAGQPCRVCGEPIRCVRLGQRATYYCPRCQR). Residue R261 is the Proton donor; for delta-elimination activity of the active site.

The protein belongs to the FPG family. In terms of assembly, monomer. Requires Zn(2+) as cofactor.

The catalysed reaction is Hydrolysis of DNA containing ring-opened 7-methylguanine residues, releasing 2,6-diamino-4-hydroxy-5-(N-methyl)formamidopyrimidine.. It catalyses the reaction 2'-deoxyribonucleotide-(2'-deoxyribose 5'-phosphate)-2'-deoxyribonucleotide-DNA = a 3'-end 2'-deoxyribonucleotide-(2,3-dehydro-2,3-deoxyribose 5'-phosphate)-DNA + a 5'-end 5'-phospho-2'-deoxyribonucleoside-DNA + H(+). In terms of biological role, involved in base excision repair of DNA damaged by oxidation or by mutagenic agents. Acts as a DNA glycosylase that recognizes and removes damaged bases. Has a preference for oxidized purines, such as 7,8-dihydro-8-oxoguanine (8-oxoG). Has AP (apurinic/apyrimidinic) lyase activity and introduces nicks in the DNA strand. Cleaves the DNA backbone by beta-delta elimination to generate a single-strand break at the site of the removed base with both 3'- and 5'-phosphates. This Methylococcus capsulatus (strain ATCC 33009 / NCIMB 11132 / Bath) protein is Formamidopyrimidine-DNA glycosylase.